The primary structure comprises 34 residues: Photosystem II reaction center protein Psb30 (34 aa).

A helical transmembrane segment spans residues 9–29 (QLIATGTIMLAGPAVIVLLAL).

The protein belongs to the Psb30/Ycf12 family. PSII is composed of 1 copy each of membrane proteins PsbA, PsbB, PsbC, PsbD, PsbE, PsbF, PsbH, PsbI, PsbJ, PsbK, PsbL, PsbM, PsbT, PsbX, PsbY, PsbZ, Psb30/Ycf12, peripheral proteins of the oxygen-evolving complex and a large number of cofactors. It forms dimeric complexes.

The protein localises to the plastid. The protein resides in the chloroplast thylakoid membrane. Its function is as follows. A core subunit of photosystem II (PSII), probably helps stabilize the reaction center. This chain is Photosystem II reaction center protein Psb30, found in Phaeodactylum tricornutum (strain CCAP 1055/1).